An 80-amino-acid polypeptide reads, in one-letter code: Raniseptin-6 (80 aa).

Positions 1–22 (MAFLKKSLFLVLFLGIVSLSIC) are cleaved as a signal peptide. Residues 23 to 49 (EEEKREGEEEEKQEEENEELSEEELRE) constitute a propeptide that is removed on maturation.

Belongs to the frog skin active peptide (FSAP) family. Dermaseptin subfamily. Expressed by the skin glands.

The protein localises to the secreted. Functionally, has antibacterial activity. The polypeptide is Raniseptin-6 (Boana raniceps (Chaco tree frog)).